The following is a 615-amino-acid chain: Afadin- and alpha-actinin-binding protein (615 aa).

Coiled coils occupy residues 126–227 (KLGS…IAMD) and 266–293 (RQKQILMENAELKKVLQQMKKEMISLLS). Residues serine 290, serine 293, serine 313, and serine 319 each carry the phosphoserine modification. The disordered stretch occupies residues 293–316 (SPQKKKPRERAEDGTGTVAISDIE). The stretch at 375-461 (ISRQDHEQET…RSFTEAAIRL (87 aa)) forms a coiled coil. Phosphoserine is present on residues serine 537, serine 541, and serine 543. A disordered region spans residues 567-615 (PEESKPSEVARESTDQKWSVQSRPSSREGCYSGCSSAFRSAHGDRDDLP). Basic and acidic residues predominate over residues 568 to 581 (EESKPSEVARESTD).

Belongs to the ADIP family. Interacts with SSX2 and SSX3. Does not interact with SSX1 and SSX4. Interacts with afadin and alpha-actinin. Interacts with VAV2. Interacts with PCM1. Interacts with WRAP73. As to expression, widely expressed.

Its subcellular location is the cell junction. It localises to the adherens junction. The protein resides in the nucleus. It is found in the cytoplasm. The protein localises to the cytoskeleton. Its subcellular location is the microtubule organizing center. It localises to the centrosome. The protein resides in the centriolar satellite. It is found in the cilium basal body. Its function is as follows. Belongs to an adhesion system, which plays a role in the organization of homotypic, interneuronal and heterotypic cell-cell adherens junctions (AJs). May connect the nectin-afadin and E-cadherin-catenin system through alpha-actinin and may be involved in organization of the actin cytoskeleton at AJs through afadin and alpha-actinin. Acts as a centrosome maturation factor, probably by maintaining the integrity of the pericentriolar material and proper microtubule nucleation at mitotic spindle poles. The function seems to implicate at least in part WRAP73; the SSX2IP:WRAP73 complex is proposed to act as regulator of spindle anchoring at the mitotic centrosome. Involved in cell movement: localizes at the leading edge of moving cells in response to PDGF and is required for the formation of the leading edge and the promotion of cell movement, possibly via activation of Rac signaling. Involved in ciliogenesis. It is required for targeted recruitment of the BBSome, CEP290, RAB8, and SSTR3 to the cilia. This chain is Afadin- and alpha-actinin-binding protein (Ssx2ip), found in Mus musculus (Mouse).